The following is an 89-amino-acid chain: Small ribosomal subunit protein uS15 (89 aa).

The protein belongs to the universal ribosomal protein uS15 family. Part of the 30S ribosomal subunit. Forms a bridge to the 50S subunit in the 70S ribosome, contacting the 23S rRNA.

Functionally, one of the primary rRNA binding proteins, it binds directly to 16S rRNA where it helps nucleate assembly of the platform of the 30S subunit by binding and bridging several RNA helices of the 16S rRNA. Forms an intersubunit bridge (bridge B4) with the 23S rRNA of the 50S subunit in the ribosome. This Trichormus variabilis (strain ATCC 29413 / PCC 7937) (Anabaena variabilis) protein is Small ribosomal subunit protein uS15.